A 241-amino-acid chain; its full sequence is Phosphoribosylaminoimidazole-succinocarboxamide synthase (241 aa).

This sequence belongs to the SAICAR synthetase family.

It catalyses the reaction 5-amino-1-(5-phospho-D-ribosyl)imidazole-4-carboxylate + L-aspartate + ATP = (2S)-2-[5-amino-1-(5-phospho-beta-D-ribosyl)imidazole-4-carboxamido]succinate + ADP + phosphate + 2 H(+). The protein operates within purine metabolism; IMP biosynthesis via de novo pathway; 5-amino-1-(5-phospho-D-ribosyl)imidazole-4-carboxamide from 5-amino-1-(5-phospho-D-ribosyl)imidazole-4-carboxylate: step 1/2. This Methanoculleus marisnigri (strain ATCC 35101 / DSM 1498 / JR1) protein is Phosphoribosylaminoimidazole-succinocarboxamide synthase.